Consider the following 975-residue polypeptide: Glycine dehydrogenase (decarboxylating) (975 aa).

Lys723 carries the N6-(pyridoxal phosphate)lysine modification.

It belongs to the GcvP family. As to quaternary structure, the glycine cleavage system is composed of four proteins: P, T, L and H. Requires pyridoxal 5'-phosphate as cofactor.

The enzyme catalyses N(6)-[(R)-lipoyl]-L-lysyl-[glycine-cleavage complex H protein] + glycine + H(+) = N(6)-[(R)-S(8)-aminomethyldihydrolipoyl]-L-lysyl-[glycine-cleavage complex H protein] + CO2. Its function is as follows. The glycine cleavage system catalyzes the degradation of glycine. The P protein binds the alpha-amino group of glycine through its pyridoxal phosphate cofactor; CO(2) is released and the remaining methylamine moiety is then transferred to the lipoamide cofactor of the H protein. The protein is Glycine dehydrogenase (decarboxylating) of Burkholderia multivorans (strain ATCC 17616 / 249).